Consider the following 1066-residue polypeptide: Allene oxide synthase-lipoxygenase protein (1066 aa).

The allene oxide synthase stretch occupies residues methionine 1–glycine 371. Tyrosine 353 provides a ligand contact to heme. Residues glutamine 372 to isoleucine 1066 form an arachidonate 8-lipoxygenase region. Residues alanine 374 to alanine 490 form the PLAT domain. 9 residues coordinate Ca(2+): histidine 387, glycine 389, threonine 390, aspartate 391, asparagine 416, aspartate 417, glutamate 419, aspartate 452, and aspartate 454. Residues threonine 491–isoleucine 1066 enclose the Lipoxygenase domain. Residues histidine 757, histidine 762, histidine 943, asparagine 947, and isoleucine 1066 each contribute to the Fe cation site.

It in the C-terminal section; belongs to the lipoxygenase family. Dimer. Requires Ca(2+) as cofactor. Fe cation serves as cofactor. Heme is required as a cofactor.

It is found in the cytoplasm. Its subcellular location is the membrane. The enzyme catalyses (5Z,8Z,11Z,14Z)-eicosatetraenoate + O2 = (8R)-hydroperoxy-(5Z,9E,11Z,14Z)-eicosatetraenoate. It catalyses the reaction (8R)-hydroperoxy-(5Z,9E,11Z,14Z)-eicosatetraenoate = 8,9-epoxy-(5Z,9E,11Z,14Z)-eicosatetraenoate + H2O. The catalysed reaction is (5Z,8Z,11Z,14Z,17Z)-eicosapentaenoate + O2 = (8R)-hydroperoxy-(5Z,9E,11Z,14Z,17Z)-eicosapentaenoate. It carries out the reaction (4Z,7Z,10Z,13Z,16Z,19Z)-docosahexaenoate + O2 = 10-hydroperoxy-(4Z,7Z,11E,13Z,16Z,19Z)-docosahexaenoate. The enzyme catalyses (8Z,11Z,14Z)-eicosatrienoate + O2 = (8R)-hydroperoxy-(9E,11Z,14Z)-eicosatrienoate. It catalyses the reaction (8Z,11Z,14Z)-eicosatrienoate + O2 = 10-hydroperoxy-(8Z,11Z,14Z)-eicosatrienoate. The catalysed reaction is (8Z,11Z,14Z)-eicosatrienoate + O2 = 11-hydroperoxy-(8Z,12E,14Z)-eicosatrienoate. Its pathway is lipid metabolism; arachidonate metabolism. It participates in lipid metabolism; fatty acid metabolism. Its activity is regulated as follows. Lipoxygenase activity is stimulated by calcium, sodium, lithium and potassium ions. Calcium binding promotes interaction with membranes and thus facilitates access to substrates. In terms of biological role, bifunctional enzyme which is responsible for allene oxide biosynthesis via a two-step reaction; first the lipoxygenase reaction that converts polyunsaturated fatty acids such as arachidonate ((5Z,8Z,11Z,14Z)-eicosatetraenoate) into a (8R)-hydroperoxide intermediate ((8R)-hydroperoxy-(5Z,9E,11Z,14Z)-eicosatetraenoate) followed by the allene oxide synthase reaction that converts the hydroperoxide intermediate ((8R)-hydroperoxy-(5Z,9E,11Z,14Z)-eicosatetraenoate) into the allene oxide (8,9-epoxy-(5Z,9E,11Z,14Z)-eicosatetraenoate). Shows preference for C20 or C22 highly polyunsaturated fatty acids and no activity with C18 fatty acids in vitro. Fatty acid allene oxides are intermediates in the formation of cyclopentenones or hydrolytic products in marine systems, most notably the prostanoid-related clavulones. This Plexaura homomalla (Black sea rod) protein is Allene oxide synthase-lipoxygenase protein.